A 585-amino-acid chain; its full sequence is ATP-dependent lipid A-core flippase (585 aa).

5 helical membrane passes run 24–44 (LWKV…ASAA), 65–85 (LLVP…SFCG), 143–163 (ITVV…MIYV), 165–185 (WKLT…IGYV), and 253–273 (PIIQ…ALSP). The 282-residue stretch at 29 to 310 (ALAVLGNVIY…LTEVNAVIQR (282 aa)) folds into the ABC transmembrane type-1 domain. The 237-residue stretch at 342-578 (LEFKSLGFAY…DGAYAALHKL (237 aa)) folds into the ABC transporter domain. 376–383 (GRSGSGKS) is a binding site for ATP.

It belongs to the ABC transporter superfamily. Lipid exporter (TC 3.A.1.106) family. As to quaternary structure, homodimer.

The protein resides in the cell inner membrane. It catalyses the reaction ATP + H2O + lipid A-core oligosaccharideSide 1 = ADP + phosphate + lipid A-core oligosaccharideSide 2.. Involved in lipopolysaccharide (LPS) biosynthesis. Translocates lipid A-core from the inner to the outer leaflet of the inner membrane. Transmembrane domains (TMD) form a pore in the inner membrane and the ATP-binding domain (NBD) is responsible for energy generation. This Hahella chejuensis (strain KCTC 2396) protein is ATP-dependent lipid A-core flippase.